Consider the following 121-residue polypeptide: Large ribosomal subunit protein uL18 (121 aa).

It belongs to the universal ribosomal protein uL18 family. Part of the 50S ribosomal subunit; part of the 5S rRNA/L5/L18/L25 subcomplex. Contacts the 5S and 23S rRNAs.

Functionally, this is one of the proteins that bind and probably mediate the attachment of the 5S RNA into the large ribosomal subunit, where it forms part of the central protuberance. The chain is Large ribosomal subunit protein uL18 from Spiroplasma kunkelii.